The primary structure comprises 189 residues: Inner membrane-spanning protein YciB (189 aa).

5 helical membrane passes run 4–24 (FFEF…DIYI), 53–73 (ITFG…DDVF), 76–96 (WKVT…QFFY), 121–141 (MAWA…AFSL), and 149–169 (FKVF…GLYI).

It belongs to the YciB family.

The protein localises to the cell inner membrane. Functionally, plays a role in cell envelope biogenesis, maintenance of cell envelope integrity and membrane homeostasis. This is Inner membrane-spanning protein YciB from Psychromonas ingrahamii (strain DSM 17664 / CCUG 51855 / 37).